The primary structure comprises 465 residues: Putative F-box/LRR-repeat protein At3g28410 (465 aa).

Residues 27–73 form the F-box domain; it reads ADFINYMPDDILHHILSFIPTDLAMRTSVLSRRWRHVWCETPCLDIK. LRR repeat units lie at residues 127-155, 178-203, 207-225, 278-302, 332-357, 402-427, and 447-465; these read VRDFTYTKTYRFPDIFYISSSLKQLDVTL, FCQIPDESMHNILSGCPILESLTLDT, LERLDLSKSPNLRRLDINR, ADRYQTMALEMLSKFHNVKRLTVGE, FVRSVIPGISRLLQNSPGLKKLTLHT, TSKLVASFMNLVLRNAKTLERMVVWL, and VETLSHNNNVSILLKQSNC.

The protein is Putative F-box/LRR-repeat protein At3g28410 of Arabidopsis thaliana (Mouse-ear cress).